The following is a 370-amino-acid chain: Histidinol-phosphate aminotransferase 1 (370 aa).

An N6-(pyridoxal phosphate)lysine modification is found at Lys-222.

It belongs to the class-II pyridoxal-phosphate-dependent aminotransferase family. Histidinol-phosphate aminotransferase subfamily. Homodimer. Pyridoxal 5'-phosphate is required as a cofactor.

It carries out the reaction L-histidinol phosphate + 2-oxoglutarate = 3-(imidazol-4-yl)-2-oxopropyl phosphate + L-glutamate. Its pathway is amino-acid biosynthesis; L-histidine biosynthesis; L-histidine from 5-phospho-alpha-D-ribose 1-diphosphate: step 7/9. In Bacillus cereus (strain ATCC 10987 / NRS 248), this protein is Histidinol-phosphate aminotransferase 1.